Consider the following 1112-residue polypeptide: Cytosolic carboxypeptidase 4 (1112 aa).

The interval 291–345 is disordered; that stretch reads TTEPPHDLPEEDFEDDGDDEVDKDSDTEDGKVEDDDLETDVNKLSSKPGLDRPEE. A compositionally biased stretch (acidic residues) spans 299–329; the sequence is PEEDFEDDGDDEVDKDSDTEDGKVEDDDLET. Residues 732-1022 form the Peptidase M14 domain; it reads YPYTYTALMT…HPVDGLQGLQ (291 aa). The Zn(2+) site is built by His-804, Glu-807, and His-901. Glu-986 functions as the Proton donor/acceptor in the catalytic mechanism.

This sequence belongs to the peptidase M14 family. In terms of assembly, interacts with MYLK. Interacts with TCF4. Requires Zn(2+) as cofactor. In terms of tissue distribution, expressed in corneal endothelium.

The protein resides in the cytoplasm. It localises to the cytosol. It carries out the reaction (L-glutamyl)(n+1)-gamma-L-glutamyl-L-glutamyl-[protein] + H2O = (L-glutamyl)(n)-gamma-L-glutamyl-L-glutamyl-[protein] + L-glutamate. The catalysed reaction is C-terminal L-alpha-aminoacyl-L-glutamyl-L-glutamyl-[tubulin] + H2O = C-terminal L-alpha-aminoacyl-L-glutamyl-[tubulin] + L-glutamate. Its function is as follows. Metallocarboxypeptidase that mediates deglutamylation of tubulin and non-tubulin target proteins. Catalyzes the removal of polyglutamate side chains present on the gamma-carboxyl group of glutamate residues within the C-terminal tail of tubulin protein. Specifically cleaves tubulin long-side-chains, while it is not able to remove the branching point glutamate. Also catalyzes the removal of polyglutamate residues from the carboxy-terminus of non-tubulin proteins such as MYLK. This Homo sapiens (Human) protein is Cytosolic carboxypeptidase 4.